We begin with the raw amino-acid sequence, 368 residues long: Cobalt-precorrin-5B C(1)-methyltransferase (368 aa).

The protein belongs to the CbiD family.

It carries out the reaction Co-precorrin-5B + S-adenosyl-L-methionine = Co-precorrin-6A + S-adenosyl-L-homocysteine. It functions in the pathway cofactor biosynthesis; adenosylcobalamin biosynthesis; cob(II)yrinate a,c-diamide from sirohydrochlorin (anaerobic route): step 6/10. Functionally, catalyzes the methylation of C-1 in cobalt-precorrin-5B to form cobalt-precorrin-6A. In Synechococcus sp. (strain CC9605), this protein is Cobalt-precorrin-5B C(1)-methyltransferase.